The primary structure comprises 581 residues: Sabinene synthase 1, chloroplastic (581 aa).

The N-terminal 28 residues, 1 to 28, are a transit peptide targeting the chloroplast; sequence MPLNSLHNLERKPSKAWSTSCTAPAARL. Positions 297, 334, 338, 475, and 478 each coordinate (2E)-geranyl diphosphate. Mg(2+) is bound by residues D334 and D338. The DDXXD motif motif lies at 334–338; it reads DDVYD. The Mg(2+) site is built by D478, T482, and E486.

Belongs to the terpene synthase family. Tpsb subfamily. Mg(2+) is required as a cofactor. It depends on Mn(2+) as a cofactor.

The protein resides in the plastid. It localises to the chloroplast. The catalysed reaction is (2E)-geranyl diphosphate = sabinene + diphosphate. It carries out the reaction (2E)-geranyl diphosphate = beta-myrcene + diphosphate. The protein operates within secondary metabolite biosynthesis; terpenoid biosynthesis. Monoterpene synthase (TPS) involved in the biosynthesis of monoterpene natural products, components of the chemical defense arsenal. Catalyzes the conversion of (2E)-geranyl diphosphate (GPP) into sabinene, and, as minor products, myrcene. This chain is Sabinene synthase 1, chloroplastic, found in Salvia pomifera (Apple sage).